The chain runs to 431 residues: Ammonium transporter 3 (431 aa).

Residues M1–S27 are Extracellular-facing. Residues W28–A48 traverse the membrane as a helical segment. The Cytoplasmic segment spans residues G49–N63. Residues L64–G84 traverse the membrane as a helical segment. Topologically, residues K85–Y102 are extracellular. A helical membrane pass occupies residues T103–A125. The Cytoplasmic segment spans residues M126–C134. Residues Y135–W155 form a helical membrane-spanning segment. Topologically, residues S156–W160 are extracellular. A helical transmembrane segment spans residues L161 to I181. The Cytoplasmic segment spans residues T182–S211. The chain crosses the membrane as a helical span at residues V212–G232. Over A233–S249 the chain is Extracellular. The helical transmembrane segment at V250–F270 threads the bilayer. Topologically, residues N271–W300 are cytoplasmic. The helical transmembrane segment at A301–L321 threads the bilayer. Topologically, residues N322–T333 are extracellular. Residues A334–G354 form a helical membrane-spanning segment. Over R355–R357 the chain is Cytoplasmic. The helical transmembrane segment at N358–V378 threads the bilayer. Position 379 (Q379) is a topological domain, extracellular. A helical membrane pass occupies residues L380–T400. Over M401 to D431 the chain is Cytoplasmic.

Belongs to the ammonia transporter channel (TC 1.A.11.2) family.

It is found in the cell membrane. The protein resides in the endosome membrane. The protein localises to the cytoplasmic vesicle. It localises to the phagosome membrane. Ammonium transporter that mediates the import of ammonium in prespore cells. Controls ammonium homeostasis during growth and development. Ammonium has been shown to function as a morphogen at multiple steps during the development. May function as an ammonia sensor that relays information concerning ammonia concentrations to the signaling pathway involved in the slug versus culmination choice and regulates prestalk gene expression. This Dictyostelium discoideum (Social amoeba) protein is Ammonium transporter 3 (amtC).